The primary structure comprises 842 residues: Molybdenum cofactor sulfurase (842 aa).

At Lys-236 the chain carries N6-(pyridoxal phosphate)lysine. Cys-402 is an active-site residue. Positions 637–680 (PGSQHGDAQRSSKARLQKHQITTDQESDVQEVHPGSGTTTDSTW) are disordered. Residues 663–831 (SDVQEVHPGS…AARGDVAYPT (169 aa)) enclose the MOSC domain.

It belongs to the class-V pyridoxal-phosphate-dependent aminotransferase family. MOCOS subfamily. Pyridoxal 5'-phosphate is required as a cofactor.

The catalysed reaction is Mo-molybdopterin + L-cysteine + AH2 = thio-Mo-molybdopterin + L-alanine + A + H2O. It participates in cofactor biosynthesis; molybdopterin biosynthesis. Sulfurates the molybdenum cofactor. Sulfation of molybdenum is essential for xanthine dehydrogenase (XDH) and aldehyde oxidase (ADO) enzymes in which molybdenum cofactor is liganded by 1 oxygen and 1 sulfur atom in active form. In Pyricularia oryzae (strain 70-15 / ATCC MYA-4617 / FGSC 8958) (Rice blast fungus), this protein is Molybdenum cofactor sulfurase.